Consider the following 367-residue polypeptide: CCCH-type zinc finger protein moe-3 (367 aa).

Residues 1-15 are compositionally biased toward basic and acidic residues; that stretch reads MSKVKGDLEKSDKRP. The interval 1-57 is disordered; sequence MSKVKGDLEKSDKRPPSSMSTGSADSGVFSSGVHASSPSHSQGSSSQSGPPSPTTQL. Low complexity predominate over residues 30–49; it reads SSGVHASSPSHSQGSSSQSG. The stretch at 63-92 forms a coiled coil; the sequence is ETANLIAVNEQLRKEIAENKQIQTNQMRAL. Residues 107–126 are disordered; the sequence is SISPHHGFPQRPPRGERRMQ. 2 C3H1-type zinc fingers span residues 130–158 and 172–200; these read SYKTVICQAWLESKTCTFAENCRFAHGEE and KYKTKLCDKYTTTGLCPYGKRCLFIHPDN. The tract at residues 235–268 is disordered; sequence NTRNSYNQQPPPMGGLEMQSSPMKSSSDSSHMRS. The segment covering 252 to 268 has biased composition (low complexity); that stretch reads MQSSPMKSSSDSSHMRS.

In terms of tissue distribution, exclusively expressed in the hermaphrodite gonad. Weakly distributed throughout gonadal oocytes from the mitotic stage to the developing diakinesis stage, with expression restricted to the distal region of the gonad.

Its function is as follows. Zinc-finger protein that may play a role in oocyte maturation and fertility. The sequence is that of CCCH-type zinc finger protein moe-3 from Caenorhabditis elegans.